The primary structure comprises 143 residues: Auxin-responsive protein SAUR67 (143 aa).

Belongs to the ARG7 family.

The protein resides in the cell membrane. May promote auxin-stimulated organ elongation, such as hypocotyls, stamen filaments and petals. In Arabidopsis thaliana (Mouse-ear cress), this protein is Auxin-responsive protein SAUR67.